The sequence spans 334 residues: Aspartate carbamoyltransferase catalytic subunit (334 aa).

2 residues coordinate carbamoyl phosphate: arginine 71 and threonine 72. L-aspartate is bound at residue lysine 99. Arginine 121, histidine 151, and glutamine 154 together coordinate carbamoyl phosphate. The L-aspartate site is built by arginine 184 and arginine 239. Glycine 280 and proline 281 together coordinate carbamoyl phosphate.

It belongs to the aspartate/ornithine carbamoyltransferase superfamily. ATCase family. In terms of assembly, heterododecamer (2C3:3R2) of six catalytic PyrB chains organized as two trimers (C3), and six regulatory PyrI chains organized as three dimers (R2).

It catalyses the reaction carbamoyl phosphate + L-aspartate = N-carbamoyl-L-aspartate + phosphate + H(+). Its pathway is pyrimidine metabolism; UMP biosynthesis via de novo pathway; (S)-dihydroorotate from bicarbonate: step 2/3. Catalyzes the condensation of carbamoyl phosphate and aspartate to form carbamoyl aspartate and inorganic phosphate, the committed step in the de novo pyrimidine nucleotide biosynthesis pathway. The chain is Aspartate carbamoyltransferase catalytic subunit from Pseudomonas fluorescens (strain SBW25).